Consider the following 661-residue polypeptide: Hemocyanin C chain (661 aa).

A disulfide bridge links Cys3 with Cys557. His200, His204, His230, His350, His354, and His390 together coordinate Cu cation. Asn476 carries an N-linked (GlcNAc...) asparagine glycan.

It belongs to the tyrosinase family. Hemocyanin subfamily. In terms of assembly, hexamer of a number of different chains, of which A, B, and C have been identified. In terms of tissue distribution, hemolymph.

Its subcellular location is the secreted. It is found in the extracellular space. Functionally, hemocyanins are copper-containing oxygen carriers occurring freely dissolved in the hemolymph of many mollusks and arthropods. This is Hemocyanin C chain from Panulirus interruptus (California spiny lobster).